We begin with the raw amino-acid sequence, 65 residues long: Large ribosomal subunit protein bL32 (65 aa).

The tract at residues 1-45 is disordered; it reads MAVQQNKKTPSKRGMRRAHDVLKKPTFSVDFSSGETHRRHHVTPD.

This sequence belongs to the bacterial ribosomal protein bL32 family.

The protein is Large ribosomal subunit protein bL32 of Nitrosococcus oceani (strain ATCC 19707 / BCRC 17464 / JCM 30415 / NCIMB 11848 / C-107).